A 206-amino-acid chain; its full sequence is HTH-type transcriptional regulator BetI (206 aa).

The HTH tetR-type domain occupies Pro8–Leu68. The H-T-H motif DNA-binding region spans Thr31–Phe50.

Its pathway is amine and polyamine biosynthesis; betaine biosynthesis via choline pathway [regulation]. Functionally, repressor involved in the biosynthesis of the osmoprotectant glycine betaine. It represses transcription of the choline transporter BetT and the genes of BetAB involved in the synthesis of glycine betaine. The polypeptide is HTH-type transcriptional regulator BetI (Agrobacterium fabrum (strain C58 / ATCC 33970) (Agrobacterium tumefaciens (strain C58))).